Reading from the N-terminus, the 1155-residue chain is DNA-directed RNA polymerase subunit beta (1155 aa).

The protein belongs to the RNA polymerase beta chain family. As to quaternary structure, the RNAP catalytic core consists of 2 alpha, 1 beta, 1 beta' and 1 omega subunit. When a sigma factor is associated with the core the holoenzyme is formed, which can initiate transcription.

It carries out the reaction RNA(n) + a ribonucleoside 5'-triphosphate = RNA(n+1) + diphosphate. Functionally, DNA-dependent RNA polymerase catalyzes the transcription of DNA into RNA using the four ribonucleoside triphosphates as substrates. The protein is DNA-directed RNA polymerase subunit beta of Borrelia garinii subsp. bavariensis (strain ATCC BAA-2496 / DSM 23469 / PBi) (Borreliella bavariensis).